The following is a 440-amino-acid chain: Trigger factor (440 aa).

Positions 162–247 (GDRVTFDFTG…LKKIEKFQLP (86 aa)) constitute a PPIase FKBP-type domain.

This sequence belongs to the FKBP-type PPIase family. Tig subfamily.

The protein resides in the cytoplasm. It carries out the reaction [protein]-peptidylproline (omega=180) = [protein]-peptidylproline (omega=0). In terms of biological role, involved in protein export. Acts as a chaperone by maintaining the newly synthesized protein in an open conformation. Functions as a peptidyl-prolyl cis-trans isomerase. The sequence is that of Trigger factor from Hamiltonella defensa subsp. Acyrthosiphon pisum (strain 5AT).